The primary structure comprises 330 residues: Glycoprotein integral membrane protein 1 (330 aa).

The N-terminal stretch at 1 to 23 (MEGAPLGPLALRLLLFVALPASG) is a signal peptide. Over 24-268 (WLTTGAPEPP…VFPVFFQFLN (245 aa)) the chain is Extracellular. N-linked (GlcNAc...) asparagine glycosylation is found at Asn-46, Asn-64, Asn-166, and Asn-191. The helical transmembrane segment at 269-289 (IMVVGITGAAVVITILKVLFP) threads the bilayer. At 290-330 (VSEYKGILQLDKVDVIPVTAINLYPDGPEKTAENLEDKTCI) the chain is on the cytoplasmic side.

Its subcellular location is the membrane. The sequence is that of Glycoprotein integral membrane protein 1 (GINM1) from Pongo abelii (Sumatran orangutan).